A 181-amino-acid polypeptide reads, in one-letter code: ATP-dependent protease subunit HslV (181 aa).

Residue T7 is part of the active site. Na(+) contacts are provided by A165, C168, and T171.

It belongs to the peptidase T1B family. HslV subfamily. A double ring-shaped homohexamer of HslV is capped on each side by a ring-shaped HslU homohexamer. The assembly of the HslU/HslV complex is dependent on binding of ATP.

The protein resides in the cytoplasm. The catalysed reaction is ATP-dependent cleavage of peptide bonds with broad specificity.. Its activity is regulated as follows. Allosterically activated by HslU binding. In terms of biological role, protease subunit of a proteasome-like degradation complex believed to be a general protein degrading machinery. This chain is ATP-dependent protease subunit HslV, found in Lysinibacillus sphaericus (strain C3-41).